The following is a 478-amino-acid chain: Elongation factor Tu, chloroplastic (478 aa).

Over residues 1-29 the composition is skewed to low complexity; it reads MASISAATATSSTKLVSSNSTNPLLPSST. The interval 1–31 is disordered; that stretch reads MASISAATATSSTKLVSSNSTNPLLPSSTKP. Residues 1 to 69 constitute a chloroplast transit peptide; the sequence is MASISAATAT…THRHRRFTVR (69 aa). The tr-type G domain maps to 79-283; it reads KPHVNIGTIG…AVDSYIPIPV (205 aa). A G1 region spans residues 88 to 95; the sequence is GHVDHGKT. 88-95 serves as a coordination point for GTP; sequence GHVDHGKT. Residues 129–133 form a G2 region; that stretch reads GITIN. Residues 150–153 are G3; that stretch reads DCPG. GTP contacts are provided by residues 150 to 154 and 205 to 208; these read DCPGH and NKQD. Residues 205–208 form a G4 region; that stretch reads NKQD. The segment at 243–245 is G5; that stretch reads SAL.

This sequence belongs to the TRAFAC class translation factor GTPase superfamily. Classic translation factor GTPase family. EF-Tu/EF-1A subfamily.

It localises to the plastid. Its subcellular location is the chloroplast. Its function is as follows. This protein promotes the GTP-dependent binding of aminoacyl-tRNA to the A-site of ribosomes during protein biosynthesis. This is Elongation factor Tu, chloroplastic (TUFA) from Nicotiana tabacum (Common tobacco).